The primary structure comprises 185 residues: UPF0301 protein HDEF_0602 (185 aa).

It belongs to the UPF0301 (AlgH) family.

The protein is UPF0301 protein HDEF_0602 of Hamiltonella defensa subsp. Acyrthosiphon pisum (strain 5AT).